We begin with the raw amino-acid sequence, 896 residues long: Protein translocase subunit SecA (896 aa).

Residues Q87, G105–T109, and D512 contribute to the ATP site. Disordered stretches follow at residues R565–S584 and E840–A896. Zn(2+) contacts are provided by C876, C878, C887, and H888. Residues K882–A896 are compositionally biased toward basic residues.

The protein belongs to the SecA family. Monomer and homodimer. Part of the essential Sec protein translocation apparatus which comprises SecA, SecYEG and auxiliary proteins SecDF-YajC and YidC. Zn(2+) is required as a cofactor.

It is found in the cell inner membrane. The protein localises to the cytoplasm. It carries out the reaction ATP + H2O + cellular proteinSide 1 = ADP + phosphate + cellular proteinSide 2.. Its function is as follows. Part of the Sec protein translocase complex. Interacts with the SecYEG preprotein conducting channel. Has a central role in coupling the hydrolysis of ATP to the transfer of proteins into and across the cell membrane, serving both as a receptor for the preprotein-SecB complex and as an ATP-driven molecular motor driving the stepwise translocation of polypeptide chains across the membrane. This chain is Protein translocase subunit SecA, found in Mannheimia succiniciproducens (strain KCTC 0769BP / MBEL55E).